We begin with the raw amino-acid sequence, 380 residues long: Probable protein phosphatase 2C 2 (380 aa).

One can recognise a PPM-type phosphatase domain in the interval 69 to 339 (RSGSFADIGP…DNLTVIVICF (271 aa)). Residues Asp113, Gly114, Asp287, and Asp330 each coordinate Mn(2+).

The protein belongs to the PP2C family. It depends on Mg(2+) as a cofactor. The cofactor is Mn(2+).

It catalyses the reaction O-phospho-L-seryl-[protein] + H2O = L-seryl-[protein] + phosphate. The catalysed reaction is O-phospho-L-threonyl-[protein] + H2O = L-threonyl-[protein] + phosphate. This Oryza sativa subsp. japonica (Rice) protein is Probable protein phosphatase 2C 2.